The primary structure comprises 289 residues: CBY1-interacting BAR domain-containing protein 1 (289 aa).

A mitochondrion-targeting transit peptide spans 1-47 (MMRRTLENRNAQTKQLQTAVSNVEKHFGELCQIFAAYVRKTARLRDK). The segment at 10–220 (NAQTKQLQTA…NIDEDEDLEV (211 aa)) is BAR-like. Residues 107 to 178 (KMKRDDLKAT…INNFERQKMK (72 aa)) are a coiled coil. Residues 265–289 (LRKDQQAEDDEDDELDVTEEENFLK) form a disordered region. Residues 271–289 (AEDDEDDELDVTEEENFLK) show a composition bias toward acidic residues.

Belongs to the CIBAR family. In terms of assembly, homodimer (via BAR-like domain). Heterodimer with FAM92B (via BAR-like domains). Interacts (via BAR-like domain) with CBY1; this interaction is required for targeting FAM92A to centriole and cilium basal body. Interacts (via BAR-like domain) with CBY3; both proteins form a ninefold symmetric structure at the flagellar base; are recruited to the annulus in a mutually dependent manner and regulate annulus positionning.

The protein resides in the cytoplasm. It localises to the cytoskeleton. The protein localises to the microtubule organizing center. It is found in the centrosome. Its subcellular location is the centriole. The protein resides in the cilium basal body. It localises to the cell projection. The protein localises to the cilium. It is found in the nucleus. Its subcellular location is the mitochondrion inner membrane. The protein resides in the flagellum. Plays a critical role in regulating mitochondrial ultrastructure and function by maintaining the integrity of mitochondrial morphology, particularly the organization of cristae. Preferentially binds to negatively charged phospholipids like cardiolipin and phosphatidylinositol 4,5-bisphosphate enhancing its interaction with mitochondrial membranes. Induces membrane curvature and tubulation, which are critical for maintaining mitochondrial ultrastructure and the organization of cristae. Plays a crucial role in ciliogenesis. May play a role in limb development through its role in ciliogenesis. Plays a key role in the correct positioning of the annulus, a septin-based ring structure in the sperm flagellum, serving both as a physical barrier and a membrane diffusion barrier that separates the midpiece (MP) from the principal piece (PP). This positioning is essential for proper sperm motility and function. Interacts with CBY3 to form a complex which localizes to the curved membrane region of the flagellar pocket. By doing so, may provide stability and rigidity to the periannular membrane to prevent membrane deformation. This function is crucial for halting annulus migration at the proximal end of the fibrous sheath-containing PP. This chain is CBY1-interacting BAR domain-containing protein 1, found in Homo sapiens (Human).